We begin with the raw amino-acid sequence, 239 residues long: 6-phosphogluconolactonase (239 aa).

The protein belongs to the glucosamine/galactosamine-6-phosphate isomerase family. 6-phosphogluconolactonase subfamily.

It carries out the reaction 6-phospho-D-glucono-1,5-lactone + H2O = 6-phospho-D-gluconate + H(+). It participates in carbohydrate degradation; pentose phosphate pathway; D-ribulose 5-phosphate from D-glucose 6-phosphate (oxidative stage): step 2/3. In terms of biological role, hydrolysis of 6-phosphogluconolactone to 6-phosphogluconate. This is 6-phosphogluconolactonase (pgl) from Xylella fastidiosa (strain Temecula1 / ATCC 700964).